The sequence spans 338 residues: Phosphate acyltransferase (338 aa).

The protein belongs to the PlsX family. As to quaternary structure, homodimer. Probably interacts with PlsY.

The protein resides in the cytoplasm. The enzyme catalyses a fatty acyl-[ACP] + phosphate = an acyl phosphate + holo-[ACP]. The protein operates within lipid metabolism; phospholipid metabolism. Its function is as follows. Catalyzes the reversible formation of acyl-phosphate (acyl-PO(4)) from acyl-[acyl-carrier-protein] (acyl-ACP). This enzyme utilizes acyl-ACP as fatty acyl donor, but not acyl-CoA. In Endomicrobium trichonymphae, this protein is Phosphate acyltransferase.